The following is a 374-amino-acid chain: Methionine import ATP-binding protein MetN 2 (374 aa).

The 240-residue stretch at 32–271 (VRFVGLGKTY…PQHEVSQTLL (240 aa)) folds into the ABC transporter domain. Residue 68 to 75 (GRSGAGKS) participates in ATP binding.

The protein belongs to the ABC transporter superfamily. Methionine importer (TC 3.A.1.24) family. In terms of assembly, the complex is composed of two ATP-binding proteins (MetN), two transmembrane proteins (MetI) and a solute-binding protein (MetQ).

Its subcellular location is the cell inner membrane. The catalysed reaction is L-methionine(out) + ATP + H2O = L-methionine(in) + ADP + phosphate + H(+). It carries out the reaction D-methionine(out) + ATP + H2O = D-methionine(in) + ADP + phosphate + H(+). Functionally, part of the ABC transporter complex MetNIQ involved in methionine import. Responsible for energy coupling to the transport system. The chain is Methionine import ATP-binding protein MetN 2 from Pseudomonas fluorescens (strain Pf0-1).